Consider the following 408-residue polypeptide: MTTKGPESEHPSVTLFRQYLRICTVQPNPDYGSAVTFLEERARQLGLSCQKIEVAPGYVITVLTWPGTNPLLHSILLNSHTDVVPVFKEHWHHDPFEAFKDSEGYIYARGAQDMKSVSIQYLEAVRRLKSEGHRFPRTIHMTFVPDEEVGGHKGMELFVKRPEFQALRAGFALDEGLANPTDAFTVFYSERSPWWIRVTSTGKPGHASRFIEDTAAEKLHKVVNSILAFREKERQRLQANPHLKEGAVTSVNLTKLEGGVAYNVVPATMSACFDFRVAPDVDMKAFEKQLQSWCQEAGEGVTFEFAQKFTEPRMTPTDDTDPWWAAFSGACKEMNLTLEPEIFPAATDSRYIRAVGIPALGFSPMNRTPVLLHDHNERLHEAVFLRGVDIYTRLVAALASVPALPGES.

His80 is a binding site for Zn(2+). The active site involves Asp82. Position 113 (Asp113) interacts with Zn(2+). Residue Glu147 is the Proton acceptor of the active site. The Zn(2+) site is built by Glu148, Glu175, and His373. Ser408 carries the phosphoserine modification.

This sequence belongs to the peptidase M20A family. Homodimer. It depends on Zn(2+) as a cofactor. The N-terminus is blocked.

Its subcellular location is the cytoplasm. It catalyses the reaction an N-acyl-L-amino acid + H2O = an L-alpha-amino acid + a carboxylate. The enzyme catalyses an N-acetyl-L-cysteine-S-conjugate + H2O = an S-substituted L-cysteine + acetate. Functionally, involved in the hydrolysis of N-acylated or N-acetylated amino acids (except L-aspartate). The chain is Aminoacylase-1A (Acy1a) from Rattus norvegicus (Rat).